Reading from the N-terminus, the 864-residue chain is MAVDKGRRPVPPERRAQGRKRAEPGDVTIRETRTRPVHTPEPEPELLAKDGILELEDDDDNDDDDDDDDDDKSNHHDGAPKNEDDMEAFPELVSGKDKDDDGDEDEEEDDEDEDEDASDDEAFDSDDLENWDEEADAKYGDADLSDDDDVKEGDAALERMIARARVKPDESERTTNKLGIDTGVAARFYDESRNDDGSKRGRVVQSHVTGMPKVEYPPIEPEYDSDSSTEDVPNRIGQVPLSWYDDLPHIGYDINGRRVLRPAQGDELDKFLDSVEGEGDGWFSAHDKTSGQDVKLTDEELDIIQRLERAQIPVEAYDPYEPATDWFTQHQQTTPLTARPEPKRRFVPSKWEHKKIMKIVRAIRQGRIVAHAPGRERPAFYNLWSDADEARADHPMHMPAPKLPLPSHVESYNPPAEYLFGDDEKAEWEAAEPEDRKLPFLPAKYAALRLVPGYDQALHERFQRCLDLYMAPRMRRKRLDIDDPDQLLPKLPAPRDLRPFPTHTDVVYAHAPWRIRTVSIDPSGAWLLTGPDDGHVRLWDAALGRCVATWDMNAGVARADRSPVYCVQWCPNRTFGIAAAVSVGRVTLLAPPQCGKTMYEASLAHLTTPHAAEDAATAQWTRASEADRAAGVCVRIDVRNNKHASLVPKYVRWHARGDYFATVSPEAAGEAVLIHQVSKHRSQAPFRRTRRAGNSAMAVQCVCFHPSRPWLFVATQRYVRVYDLVQQSLVKTLQPGVRWISSLDVHPSGDHVIIGSYDRRVLWFDLDLSERPYKALRYHSRAVRAVAYHPRFPLFASAADDGTVHVYHGTVYSDLLQNALLVPLKILRGHAVQDALGVLSIAWHPTLPWLVSAGADGDARLWTP.

Residues 1-52 (MAVDKGRRPVPPERRAQGRKRAEPGDVTIRETRTRPVHTPEPEPELLAKDGI) are compositionally biased toward basic and acidic residues. Disordered stretches follow at residues 1 to 153 (MAVD…VKEG) and 191 to 231 (ESRN…STED). Acidic residues predominate over residues 53–71 (LELEDDDDNDDDDDDDDDD). Over residues 72 to 83 (KSNHHDGAPKNE) the composition is skewed to basic and acidic residues. Residues 100–135 (DDGDEDEEEDDEDEDEDASDDEAFDSDDLENWDEEA) are compositionally biased toward acidic residues. 6 WD repeats span residues 509-549 (AHAP…CVAT), 559-599 (ADRS…KTMY), 694-732 (NSAMAVQCVCFHPSRPWLFVATQRYVRVYDLVQQSLVKT), 735-774 (PGVRWISSLDVHPSGDHVIIGSYDRRVLWFDLDLSERPYK), 778-817 (YHSRAVRAVAYHPRFPLFASAADDGTVHVYHGTVYSDLLQ), and 833-864 (QDALGVLSIAWHPTLPWLVSAGADGDARLWTP).

This sequence belongs to the WD repeat BOP1/ERB1 family. In terms of assembly, component of the NOP7 complex, composed of ERB1, NOP7 and YTM1. The complex is held together by ERB1, which interacts with NOP7 via its N-terminal domain and with YTM1 via a high-affinity interaction between the seven-bladed beta-propeller domains of the 2 proteins. The NOP7 complex associates with the 66S pre-ribosome.

Its subcellular location is the nucleus. The protein localises to the nucleolus. It is found in the nucleoplasm. Functionally, component of the NOP7 complex, which is required for maturation of the 25S and 5.8S ribosomal RNAs and formation of the 60S ribosome. This chain is Ribosome biogenesis protein ERB1, found in Malassezia globosa (strain ATCC MYA-4612 / CBS 7966) (Dandruff-associated fungus).